The primary structure comprises 131 residues: uncharacterized protein (131 aa).

A run of 4 helical transmembrane segments spans residues 7 to 29 (LLKF…SLLY), 49 to 69 (LVKV…LIAL), 76 to 98 (LILI…LFTY), and 102 to 124 (ELSE…FLYL).

It localises to the cell membrane. This is an uncharacterized protein from Aquifex aeolicus (strain VF5).